The chain runs to 382 residues: uncharacterized protein (382 aa).

Transmembrane regions (helical) follow at residues 8-28, 45-65, 75-95, 102-122, 131-151, 157-177, 204-224, 231-251, 270-290, 291-311, 325-345, and 349-369; these read VMLL…LNTL, MVSS…GYLI, YLAS…VGFW, FIAG…LMCS, LLAA…LLVS, LLHV…PLLF, LGVN…GLMP, GMAN…GILG, VQVF…AMAP, ALFI…AWAC, ALLL…AMLM, and SDNL…LMLL.

Belongs to the major facilitator superfamily. YcaD (TC 2.A.1.26) family.

Its subcellular location is the cell inner membrane. This is an uncharacterized protein from Salmonella paratyphi B (strain ATCC BAA-1250 / SPB7).